Reading from the N-terminus, the 217-residue chain is Pyridoxine/pyridoxamine 5'-phosphate oxidase (217 aa).

Substrate-binding positions include 13–16 and lysine 71; that span reads RREY. FMN is bound by residues 66–71, 81–82, arginine 87, lysine 88, and glutamine 110; these read RIVLLK and YT. Substrate-binding residues include tyrosine 128, arginine 132, and serine 136. Residues 145–146 and tryptophan 190 each bind FMN; that span reads QS. 196–198 serves as a coordination point for substrate; sequence RLH. Arginine 200 is a binding site for FMN.

It belongs to the pyridoxamine 5'-phosphate oxidase family. Homodimer. Requires FMN as cofactor.

The catalysed reaction is pyridoxamine 5'-phosphate + O2 + H2O = pyridoxal 5'-phosphate + H2O2 + NH4(+). It carries out the reaction pyridoxine 5'-phosphate + O2 = pyridoxal 5'-phosphate + H2O2. It participates in cofactor metabolism; pyridoxal 5'-phosphate salvage; pyridoxal 5'-phosphate from pyridoxamine 5'-phosphate: step 1/1. Its pathway is cofactor metabolism; pyridoxal 5'-phosphate salvage; pyridoxal 5'-phosphate from pyridoxine 5'-phosphate: step 1/1. Its function is as follows. Catalyzes the oxidation of either pyridoxine 5'-phosphate (PNP) or pyridoxamine 5'-phosphate (PMP) into pyridoxal 5'-phosphate (PLP). The chain is Pyridoxine/pyridoxamine 5'-phosphate oxidase from Yersinia pestis bv. Antiqua (strain Antiqua).